The primary structure comprises 142 residues: ATP synthase epsilon chain (142 aa).

This sequence belongs to the ATPase epsilon chain family. In terms of assembly, F-type ATPases have 2 components, CF(1) - the catalytic core - and CF(0) - the membrane proton channel. CF(1) has five subunits: alpha(3), beta(3), gamma(1), delta(1), epsilon(1). CF(0) has three main subunits: a, b and c.

Its subcellular location is the cell inner membrane. In terms of biological role, produces ATP from ADP in the presence of a proton gradient across the membrane. The chain is ATP synthase epsilon chain from Shewanella denitrificans (strain OS217 / ATCC BAA-1090 / DSM 15013).